A 187-amino-acid polypeptide reads, in one-letter code: UPF0398 protein LBA1157 (187 aa).

It belongs to the UPF0398 family.

This is UPF0398 protein LBA1157 from Lactobacillus acidophilus (strain ATCC 700396 / NCK56 / N2 / NCFM).